A 533-amino-acid chain; its full sequence is Probable bifunctional tRNA threonylcarbamoyladenosine biosynthesis protein (533 aa).

The kae1 stretch occupies residues 1–329 (MTRVLGIEGT…FRPDEVPVSW (329 aa)). Residues histidine 113 and histidine 117 each contribute to the Fe cation site. L-threonylcarbamoyladenylate-binding positions include 134 to 138 (NASGA), aspartate 166, glycine 179, glutamate 183, and asparagine 262. Residue aspartate 290 participates in Fe cation binding. A Protein kinase domain is found at 338–533 (PVPTDERRQG…REIETRGRYQ (196 aa)). Residues 345-352 (RQGAEAVV) and lysine 363 each bind ATP. The active-site Proton acceptor; for kinase activity is the aspartate 452.

This sequence in the N-terminal section; belongs to the KAE1 / TsaD family. In the C-terminal section; belongs to the protein kinase superfamily. Tyr protein kinase family. BUD32 subfamily. Component of the KEOPS complex that consists of Kae1, Bud32, Cgi121 and Pcc1; the whole complex dimerizes. Fe(2+) serves as cofactor.

It is found in the cytoplasm. The enzyme catalyses L-seryl-[protein] + ATP = O-phospho-L-seryl-[protein] + ADP + H(+). The catalysed reaction is L-threonyl-[protein] + ATP = O-phospho-L-threonyl-[protein] + ADP + H(+). It carries out the reaction L-threonylcarbamoyladenylate + adenosine(37) in tRNA = N(6)-L-threonylcarbamoyladenosine(37) in tRNA + AMP + H(+). Functionally, required for the formation of a threonylcarbamoyl group on adenosine at position 37 (t(6)A37) in tRNAs that read codons beginning with adenine. Is a component of the KEOPS complex that is probably involved in the transfer of the threonylcarbamoyl moiety of threonylcarbamoyl-AMP (TC-AMP) to the N6 group of A37. The Kae1 domain likely plays a direct catalytic role in this reaction. The Bud32 domain probably displays kinase activity that regulates Kae1 function. The sequence is that of Probable bifunctional tRNA threonylcarbamoyladenosine biosynthesis protein from Natronomonas pharaonis (strain ATCC 35678 / DSM 2160 / CIP 103997 / JCM 8858 / NBRC 14720 / NCIMB 2260 / Gabara) (Halobacterium pharaonis).